The primary structure comprises 653 residues: E3 ubiquitin-protein ligase TRIM32 (653 aa).

Position 2 is an N-acetylalanine (Ala-2). The RING-type zinc finger occupies 20–65; that stretch reads CPICMESFTEEQLRPKLLHCGHTICRQCLEKLLASSINGVRCPFCS. The residue at position 55 (Ser-55) is a Phosphoserine; by CHEK2. Positions 100, 103, 123, and 128 each coordinate Zn(2+). The B box-type zinc-finger motif lies at 103-133; sequence CGRRLPRQFCRSCGLVLCEPCREADHQPPGH. Residues 138–197 are a coiled coil; it reads VKEAAEERRRDFGEKLTRLRELMGELQRRKAALEGVSKDLQARYKAVLQEYGHEERRVQD. Phosphoserine occurs at positions 328, 335, and 339. NHL repeat units follow at residues 358 to 401, 415 to 458, 459 to 499, 562 to 605, and 606 to 646; these read LKKM…FTRK, DSFV…YTLD, GHCV…FTVD, GRQI…FPKG, and GGYS…YSYH.

The protein belongs to the TRIM/RBCC family. As to quaternary structure, it self-associates. Interacts with DTNBP1. Interacts with PIAS4/PIASY upon treatment with UVB and TNF-alpha. Interacts with AMBRA1; promoting activation of ULK1 through unanchored 'Lys-63'-linked polyubiquitin chains. Interacts with TICAM1 and TAX1BP1; these interactions target TICAM1 to TAX1BP1-mediated selective autophagic degradation. In terms of assembly, (Microbial infection) Interacts with S.typhimurium protein SseK3; SseK3 does not glycosylate TRIM32. In terms of processing, ubiquitinated. Phosphorylation at Ser-55 by CHEK2 under oxidative stress, activates the E3 ligase activity and promotes ATG7 ubiquitination leading to positive regulation of the autophagosme assembly. In terms of tissue distribution, spleen, thymus, prostate, testis, ovary, intestine, colon and skeletal muscle.

Its subcellular location is the cytoplasm. The protein localises to the mitochondrion. It localises to the endoplasmic reticulum. The enzyme catalyses S-ubiquitinyl-[E2 ubiquitin-conjugating enzyme]-L-cysteine + [acceptor protein]-L-lysine = [E2 ubiquitin-conjugating enzyme]-L-cysteine + N(6)-ubiquitinyl-[acceptor protein]-L-lysine.. Its pathway is protein modification; protein ubiquitination. In terms of biological role, E3 ubiquitin ligase that plays a role in various biological processes including neural stem cell differentiation, innate immunity, inflammatory resonse and autophagy. Plays a role in virus-triggered induction of IFN-beta and TNF-alpha by mediating the ubiquitination of STING1. Mechanistically, targets STING1 for 'Lys-63'-linked ubiquitination which promotes the interaction of STING1 with TBK1. Regulates bacterial clearance and promotes autophagy in Mycobacterium tuberculosis-infected macrophages. Negatively regulates TLR3/4-mediated innate immune and inflammatory response by triggering the autophagic degradation of TICAM1 in an E3 activity-independent manner. Plays an essential role in oxidative stress induced cell death by inducing loss of transmembrane potential and enhancing mitochondrial reactive oxygen species (ROS) production during oxidative stress conditions. Ubiquitinates XIAP and targets it for proteasomal degradation. Ubiquitinates DTNBP1 (dysbindin) and promotes its degradation. May ubiquitinate BBS2. Ubiquitinates PIAS4/PIASY and promotes its degradation in keratinocytes treated with UVB and TNF-alpha. Also acts as a regulator of autophagy by mediating formation of unanchored 'Lys-63'-linked polyubiquitin chains that activate ULK1: interaction with AMBRA1 is required for ULK1 activation. Positively regulates dendritic branching by promoting ubiquitination and subsequent degradation of the epigenetic factor CDYL. Under metabolic stress and phosphorylation by CHK2, mediates 'Lys-63'-linked ubiquitination of ATG7 at 'Lys-45' to initiate autophagy. (Microbial infection) May play a significant role in mediating the biological activity of the HIV-1 Tat protein in vivo. Binds specifically to the activation domain of HIV-1 Tat and can also interact with the HIV-2 and EIAV Tat proteins in vivo. In Homo sapiens (Human), this protein is E3 ubiquitin-protein ligase TRIM32.